A 583-amino-acid polypeptide reads, in one-letter code: Proline--tRNA ligase (583 aa).

It belongs to the class-II aminoacyl-tRNA synthetase family. ProS type 1 subfamily. As to quaternary structure, homodimer.

The protein resides in the cytoplasm. It catalyses the reaction tRNA(Pro) + L-proline + ATP = L-prolyl-tRNA(Pro) + AMP + diphosphate. Its function is as follows. Catalyzes the attachment of proline to tRNA(Pro) in a two-step reaction: proline is first activated by ATP to form Pro-AMP and then transferred to the acceptor end of tRNA(Pro). As ProRS can inadvertently accommodate and process non-cognate amino acids such as alanine and cysteine, to avoid such errors it has two additional distinct editing activities against alanine. One activity is designated as 'pretransfer' editing and involves the tRNA(Pro)-independent hydrolysis of activated Ala-AMP. The other activity is designated 'posttransfer' editing and involves deacylation of mischarged Ala-tRNA(Pro). The misacylated Cys-tRNA(Pro) is not edited by ProRS. This is Proline--tRNA ligase from Aromatoleum aromaticum (strain DSM 19018 / LMG 30748 / EbN1) (Azoarcus sp. (strain EbN1)).